The following is a 478-amino-acid chain: Ninja-family protein 8 (478 aa).

3 disordered regions span residues 1–247 (MDDD…LTPG), 337–374 (FTAKDKADQTGTKQVDDGKKPQEAGASSSAHAEDEKKA), and 454–478 (DAPAQDNSATLPAFPAGNQATSAEN). Positions 23 to 35 (KARDAPLEPKAEP) are enriched in basic and acidic residues. A compositionally biased stretch (polar residues) spans 169–179 (ISISTDDGSTG). Positions 180–189 (ENEDVAESEA) are enriched in acidic residues. Over residues 233-242 (SFSGSESSSG) the composition is skewed to low complexity. Positions 339–358 (AKDKADQTGTKQVDDGKKPQ) are enriched in basic and acidic residues.

The protein belongs to the Ninja family.

It localises to the nucleus. In Zea mays (Maize), this protein is Ninja-family protein 8.